Reading from the N-terminus, the 663-residue chain is MGLYRVRVSTGSSFCAGSNNQVHLWLVGEHGEAALGWRLRPARGKEVEFQVDVSEYLGRLLFVKLRKRHLLSDDAWFCNWISVQGPGASGNEFRFPCYRWVEGDGILSLPEGTGRTVVDDPQGLFKKHREEELAERRKLYRWGNWKDGLILNIAGATINDLPVDERFLEDKRIDFEASLTKGLADLAIKDSLNILTCWKSLDDFNRIFWCGQSKLAERVRDSWKEDALFGYQFLNGTNPMLLRRSVRLPARLEFPPGMGELQAELEKELQQGTLFEADFSLLDGIKANVILCTQQYVAAPLVMLKLQPDGKLLPMAIQLQLPHKGSPPPPLFLPTDPPMTWLLAKCWVRSSDFQLHELHSHLLRGHLVAEVIAVATMRCLPSIHPMFKLLIPHLRYTMEINIRARTGLVSDSGVFDQVVSTGGGGHVELLQRAGAFLTYSSFCPPDDLADRGLLGVKSSFYAQDALRLWEILSRYVEGIVSLHYKTDESVRDDIELQAWCRDITEIGLLGAQDRGFPVTLQSKDQLCHFVTMCIFTCTGQHSSTHLGQLDWYSWVPNAPCTMRLPPPTTKDVTLEKVMATLPNFHQASLQMSITWQLGRRQPIMVALGQHEEEYFSGPEPKAVLKKFREELAALEKDIEIRNAQLDWPYEYLRPSLVENSVAI.

In terms of domain architecture, PLAT spans 2 to 115; that stretch reads GLYRVRVSTG…ILSLPEGTGR (114 aa). The 548-residue stretch at 116–663 folds into the Lipoxygenase domain; the sequence is TVVDDPQGLF…PSLVENSVAI (548 aa). Residues His361, His366, His541, His545, and Ile663 each coordinate Fe cation.

This sequence belongs to the lipoxygenase family. In terms of assembly, interacts with PEBP1; in response to IL13/interleukin-13, prevents the interaction of PEBP1 with RAF1 to activate the ERK signaling cascade. Fe cation is required as a cofactor. Detected in tracheal epithelium.

It localises to the cytoplasm. The protein localises to the cytosol. Its subcellular location is the cell membrane. It is found in the lipid droplet. It catalyses the reaction (5Z,8Z,11Z,14Z)-eicosatetraenoate + O2 = (12S)-hydroperoxy-(5Z,8Z,10E,14Z)-eicosatetraenoate. The catalysed reaction is (5Z,8Z,11Z,14Z)-eicosatetraenoate + O2 = (15S)-hydroperoxy-(5Z,8Z,11Z,13E)-eicosatetraenoate. It carries out the reaction (9Z,12Z)-octadecadienoate + O2 = (13S)-hydroperoxy-(9Z,11E)-octadecadienoate. The enzyme catalyses (5Z,8Z,11Z,14Z)-eicosatetraenoate + 2 O2 = (14R,15S)-dihydroperoxy-(5Z,8Z,10E,12E)-eicosatetraenoate. It catalyses the reaction (5Z,8Z,11Z,14Z)-eicosatetraenoate + 2 O2 = (8S,15S)-dihydroperoxy-(5Z,9E,11Z,13E)-eicosatetraenoate. The catalysed reaction is (14S,15R)-epoxy-(5Z,8Z,11Z)-eicosatrienoate + O2 = (8S)-hydroperoxy-(14S,15R)-epoxy-(5Z,9E,11Z)-eicosatrienoate. It carries out the reaction (14S,15R)-epoxy-(5Z,8Z,11Z)-eicosatrienoate + O2 = (12S)-hydroperoxy-(14S,15R)-epoxy-(5Z,8Z,10E)-eicosatrienoate. The enzyme catalyses (14R,15S)-epoxy-(5Z,8Z,11Z)-eicosatrienoate + O2 = (5S)-hydroperoxy-(14R,15S)-epoxy-(6E,8Z,11Z)-eicosatrienoate. It catalyses the reaction (14R,15S)-epoxy-(5Z,8Z,11Z)-eicosatrienoate + O2 = (12S)-hydroperoxy-(14R,15S)-epoxy-(5Z,8Z,10E)-eicosatrienoate. The catalysed reaction is (15R)-hydroperoxy-(5Z,8Z,11Z,13E)-eicosatetraenoate = 15-oxo-(5Z,8Z,11Z,13E)-eicosatetraenoate + H2O. It carries out the reaction (15S)-hydroperoxy-(5Z,8Z,11Z,13E)-eicosatetraenoate = (14S,15S)-epoxy-(5Z,8Z,10E,12E)-eicosatetraenoate + H2O. The enzyme catalyses (12S)-hydroperoxy-(5Z,8Z,10E,14Z)-eicosatetraenoate = (8S)-hydroxy-(11S,12S)-epoxy-(5Z,9E,14Z)-eicosatrienoate. It catalyses the reaction (4Z,7Z,10Z,13Z,16Z)-docosapentaenoate + O2 = 14-hydroperoxy-(4Z,7Z,10Z,12E,16Z)-docosapentaenoate. The catalysed reaction is (7Z,10Z,13Z,16Z,19Z)-docosapentaenoate + O2 = 14-hydroperoxy-(7Z,10Z,12E,16Z,19Z)-docosapentaenoate. It carries out the reaction (4Z,7Z,10Z,13Z,16Z,19Z)-docosahexaenoate + O2 = (14S)-hydroperoxy-(4Z,7Z,10Z,12E,16Z,19Z)-docosahexaenoate. The enzyme catalyses (4Z,7Z,10Z,13Z,16Z,19Z)-docosahexaenoate + O2 = (17S)-hydroperoxy-(4Z,7Z,10Z,13Z,15E,19Z)-docosahexaenoate. It catalyses the reaction (7S)-hydroperoxy-(4Z,8E,10Z,13Z,16Z,19Z)-docosahexaenoate + O2 = (7S,14S)-dihydroperoxy-(4Z,8E,10Z,12E,16Z,19Z)-docosahexaenoate. The catalysed reaction is (7S)-hydroperoxy-(4Z,8E,10Z,13Z,16Z,19Z)-docosahexaenoate + O2 = (7S,17S)-dihydroperoxy-(4Z,8E,10Z,13Z,15E,19Z)-docosahexaenoate. It carries out the reaction (4Z,7Z,10Z,13Z,16Z,19Z)-docosahexaenoate + O2 = (11S)-hydroperoxy-(4Z,7Z,9E,13Z,16Z,19Z)-docosahexaenoate. The enzyme catalyses N-(5Z,8Z,11Z,14Z)-eicosatetraenoyl-taurine + O2 = N-(12S)-hydroperoxy-(5Z,8Z,10E,14Z)-eicosatetraenoyl-taurine. It catalyses the reaction N-(5Z,8Z,11Z,14Z)-eicosatetraenoyl-gamma-aminobutanoate + O2 = N-(12S)-hydroperoxy-(5Z,8Z,10E,14Z)-eicosatetraenoyl-gamma-aminobutanoate. The catalysed reaction is N-(5Z,8Z,11Z,14Z)-eicosatetraenoyl-glycine + O2 = N-(12S)-hydroperoxy-(5Z,8Z,10E,14Z)-eicosatetraenoyl-glycine. It carries out the reaction N-(5Z,8Z,11Z,14Z)-eicosatetraenoyl-L-alanine + O2 = N-(12S)-hydroperoxy-(5Z,8Z,10E,14Z)-eicosatetraenoyl-alanine. The enzyme catalyses N-(5Z,8Z,11Z,14Z)-eicosatetraenoyl-taurine + O2 = N-(15S)-hydroperoxy-(5Z,8Z,11Z,13E)-eicosatetraenoyl-taurine. It catalyses the reaction N-(5Z,8Z,11Z,14Z)-eicosatetraenoyl-gamma-aminobutanoate + O2 = N-(15S)-hydroperoxy-(5Z,8Z,11Z,13E)-eicosatetraenoyl-gamma-aminobutanoate. The catalysed reaction is N-(5Z,8Z,11Z,14Z)-eicosatetraenoyl-glycine + O2 = N-(15S)-hydroperoxy-(5Z,8Z,11Z,13E)-eicosatetraenoyl-glycine. It carries out the reaction N-(5Z,8Z,11Z,14Z)-eicosatetraenoyl-L-alanine + O2 = N-(15S)-hydroperoxy-(5Z,8Z,11Z,13E)-eicosatetraenoyl-alanine. It functions in the pathway lipid metabolism; hydroperoxy eicosatetraenoic acid biosynthesis. Functionally, non-heme iron-containing dioxygenase that catalyzes the stereo-specific peroxidation of free and esterified polyunsaturated fatty acids generating a spectrum of bioactive lipid mediators. It inserts peroxyl groups at C12 or C15 of arachidonate ((5Z,8Z,11Z,14Z)-eicosatetraenoate) producing both 12-hydroperoxyeicosatetraenoate/12-HPETE and 15-hydroperoxyeicosatetraenoate/15-HPETE. It may then act on 12-HPETE to produce hepoxilins, which may show pro-inflammatory properties. Can also peroxidize linoleate ((9Z,12Z)-octadecadienoate) to 13-hydroperoxyoctadecadienoate. May participate in the sequential oxidations of DHA ((4Z,7Z,10Z,13Z,16Z,19Z)-docosahexaenoate) to generate specialized pro-resolving mediators (SPMs)like resolvin D5 ((7S,17S)-diHPDHA) and (7S,14S)-diHPDHA, that actively down-regulate the immune response and have anti-aggregation properties with platelets. Can convert epoxy fatty acids to hydroperoxy-epoxides derivatives followed by an intramolecular nucleophilic substitution leading to the formation of monocyclic endoperoxides. Plays an important role during the maintenance of self-tolerance by peroxidizing membrane-bound phosphatidylethanolamine which can then signal the sorting process for clearance of apoptotic cells during inflammation and prevent an autoimmune response. In addition to its role in the immune and inflammatory responses, this enzyme may play a role in epithelial wound healing in the cornea through production of lipoxin A4 (LXA(4)) and docosahexaenoic acid-derived neuroprotectin D1 (NPD1; 10R,17S-HDHA), both lipid autacoids exhibit anti-inflammatory and neuroprotective properties. Furthermore, it may regulate actin polymerization which is crucial for several biological processes such as the phagocytosis of apoptotic cells. It is also implicated in the generation of endogenous ligands for peroxisome proliferator activated receptor (PPAR-gamma), hence modulating macrophage development and function. It may also exert a negative effect on skeletal development by regulating bone mass through this pathway. As well as participates in ER stress and downstream inflammation in adipocytes, pancreatic islets, and liver. Finally, it is also involved in the cellular response to IL13/interleukin-13. The chain is Polyunsaturated fatty acid lipoxygenase ALOX15 from Bos taurus (Bovine).